Consider the following 100-residue polypeptide: Small ribosomal subunit protein uS14c (100 aa).

This sequence belongs to the universal ribosomal protein uS14 family. In terms of assembly, part of the 30S ribosomal subunit.

It is found in the plastid. The protein resides in the chloroplast. In terms of biological role, binds 16S rRNA, required for the assembly of 30S particles. This Staurastrum punctulatum (Green alga) protein is Small ribosomal subunit protein uS14c.